The chain runs to 344 residues: Phosphoribosylformylglycinamidine cyclo-ligase (344 aa).

The protein belongs to the AIR synthase family.

Its subcellular location is the cytoplasm. It catalyses the reaction 2-formamido-N(1)-(5-O-phospho-beta-D-ribosyl)acetamidine + ATP = 5-amino-1-(5-phospho-beta-D-ribosyl)imidazole + ADP + phosphate + H(+). The protein operates within purine metabolism; IMP biosynthesis via de novo pathway; 5-amino-1-(5-phospho-D-ribosyl)imidazole from N(2)-formyl-N(1)-(5-phospho-D-ribosyl)glycinamide: step 2/2. The polypeptide is Phosphoribosylformylglycinamidine cyclo-ligase (Exiguobacterium sp. (strain ATCC BAA-1283 / AT1b)).